We begin with the raw amino-acid sequence, 202 residues long: Large ribosomal subunit protein uL13 (202 aa).

The protein belongs to the universal ribosomal protein uL13 family.

The chain is Large ribosomal subunit protein uL13 from Caenorhabditis elegans.